A 115-amino-acid polypeptide reads, in one-letter code: Glutaredoxin 4 (115 aa).

The region spanning 5 to 107 (IEKIQRQIAE…QLIKETAAKY (103 aa)) is the Glutaredoxin domain. Lys22 contributes to the glutathione binding site. Cys30 is a [2Fe-2S] cluster binding site. Glutathione contacts are provided by residues Arg59, Phe71, and 84–85 (CD).

This sequence belongs to the glutaredoxin family. Monothiol subfamily. Homodimer.

It localises to the cytoplasm. Monothiol glutaredoxin involved in the biogenesis of iron-sulfur clusters. The sequence is that of Glutaredoxin 4 (grxD) from Shigella flexneri.